The sequence spans 32 residues: Hyaluronidase-Pk1a (32 aa).

Asn23 carries N-linked (GlcNAc...) asparagine glycosylation.

The protein belongs to the glycosyl hydrolase 56 family. In terms of tissue distribution, expressed by the venom gland.

It localises to the secreted. It carries out the reaction Random hydrolysis of (1-&gt;4)-linkages between N-acetyl-beta-D-glucosamine and D-glucuronate residues in hyaluronate.. Its function is as follows. Hydrolyzes high molecular weight hyaluronic acid to produce small oligosaccharides. The sequence is that of Hyaluronidase-Pk1a from Phoneutria keyserlingi (Brazilian wandering spider).